Consider the following 236-residue polypeptide: Purine nucleoside phosphorylase DeoD-type (236 aa).

Residue H5 participates in a purine D-ribonucleoside binding. Phosphate contacts are provided by residues G21, R25, R44, and 88-91 (RVGS). Residues 180–182 (DME) and 204–205 (SD) each bind a purine D-ribonucleoside. D205 (proton donor) is an active-site residue.

The protein belongs to the PNP/UDP phosphorylase family. In terms of assembly, homohexamer; trimer of homodimers.

The enzyme catalyses a purine D-ribonucleoside + phosphate = a purine nucleobase + alpha-D-ribose 1-phosphate. The catalysed reaction is a purine 2'-deoxy-D-ribonucleoside + phosphate = a purine nucleobase + 2-deoxy-alpha-D-ribose 1-phosphate. Catalyzes the reversible phosphorolytic breakdown of the N-glycosidic bond in the beta-(deoxy)ribonucleoside molecules, with the formation of the corresponding free purine bases and pentose-1-phosphate. The sequence is that of Purine nucleoside phosphorylase DeoD-type from Aliivibrio salmonicida (strain LFI1238) (Vibrio salmonicida (strain LFI1238)).